A 745-amino-acid chain; its full sequence is Cytoskeleton-associated protein 2-like (745 aa).

The disordered stretch occupies residues 25-141; it reads AKGKLKSQNT…GELSRKPVGS (117 aa). Polar residues predominate over residues 30 to 61; the sequence is KSQNTKPYLKSKNNCQNQPPSKSTIRPKNDVT. Over residues 109-120 the composition is skewed to low complexity; that stretch reads SSNPYSKPSSKS. A compositionally biased stretch (polar residues) spans 121-133; that stretch reads FQQCEAGSSTTGE. The KEN box motif lies at 185–187; that stretch reads KEN. Residues 192 to 203 are compositionally biased toward basic and acidic residues; sequence LTEPERKPDPKL. Disordered regions lie at residues 192–217, 256–276, and 385–411; these read LTEP…YNQT, VKSQ…KPSR, and RFNS…NNGF. Residue Lys-198 forms a Glycyl lysine isopeptide (Lys-Gly) (interchain with G-Cter in SUMO1); alternate linkage. Lys-198 is covalently cross-linked (Glycyl lysine isopeptide (Lys-Gly) (interchain with G-Cter in SUMO2); alternate). Phosphotyrosine is present on Tyr-204. Residues 389 to 411 show a composition bias toward polar residues; it reads AIPSTPSIRPNGTSGNKHNNNGF. Thr-742 bears the Phosphothreonine mark. Ser-745 carries the phosphoserine modification.

The protein belongs to the CKAP2 family. In terms of processing, ubiquitinated by the anaphase promoting complex/cyclosome (APC/C).

It is found in the cytoplasm. It localises to the cytoskeleton. Its subcellular location is the spindle pole. Its function is as follows. Microtubule-associated protein required for mitotic spindle formation and cell-cycle progression in neural progenitor cells. This is Cytoskeleton-associated protein 2-like (CKAP2L) from Homo sapiens (Human).